A 396-amino-acid polypeptide reads, in one-letter code: Elongation factor Tu (396 aa).

The tr-type G domain maps to 10-205; sequence KPHVNIGTIG…AVDESIPDPV (196 aa). Residues 19-26 are G1; the sequence is GHVDHGKT. A GTP-binding site is contributed by 19 to 26; sequence GHVDHGKT. Residue T26 participates in Mg(2+) binding. The segment at 62–66 is G2; sequence GITIN. The tract at residues 83–86 is G3; the sequence is DAPG. Residues 83–87 and 138–141 contribute to the GTP site; these read DAPGH and NKAD. A G4 region spans residues 138 to 141; it reads NKAD. A G5 region spans residues 175-177; it reads SGL.

Belongs to the TRAFAC class translation factor GTPase superfamily. Classic translation factor GTPase family. EF-Tu/EF-1A subfamily. Monomer.

The protein resides in the cytoplasm. It catalyses the reaction GTP + H2O = GDP + phosphate + H(+). Functionally, GTP hydrolase that promotes the GTP-dependent binding of aminoacyl-tRNA to the A-site of ribosomes during protein biosynthesis. The protein is Elongation factor Tu of Nocardia farcinica (strain IFM 10152).